The following is a 161-amino-acid chain: Allophycocyanin beta chain (161 aa).

The residue at position 71 (Asn71) is an N4-methylasparagine. Position 81 (Cys81) interacts with (2R,3E)-phycocyanobilin.

Belongs to the phycobiliprotein family. Heterodimer of an alpha and a beta chain. Post-translationally, contains one covalently linked phycocyanobilin chromophore.

Its subcellular location is the plastid. The protein resides in the chloroplast thylakoid membrane. In terms of biological role, light-harvesting photosynthetic bile pigment-protein from the phycobiliprotein complex. Allophycocyanin has a maximum absorption at approximately 650 nanometers. The polypeptide is Allophycocyanin beta chain (apcB) (Pyropia haitanensis (Red seaweed)).